The following is a 361-amino-acid chain: MQSSLARPLRPPVLAGRGGRRGLVAVARCHAEAAPPVGTASRAPAGPYTGRDPEVKKPAWLRQRAAQGEKYARLRESIGELKLNTVCVEAQCPNIGECWNGGGGAGGEGDGIATATIMVLGDTCTRGCRFCAVKTSNKPPPPDPLEPLNTALAVASWGVDYVVLTSVDRDDLPDGGSSHFAQTVKALKELKPGILVECLTSDFRGDLEAISSLASSGLDVYAHNIETVRSLQRIVRDPRAGYDQSLAVLKHAKACREGMVTKSSIMLGLGETDEEVKQAMMDLRAIGVDILTLGQYLQPTERHLTVREYVTPEKFQFWKEYGESVGFRYVASGPLVRSSYRAGELFVQNLVRNNKTGSSSS.

[4Fe-4S] cluster contacts are provided by Cys87, Cys92, Cys98, Cys124, Cys128, Cys131, and Ser339. Positions 107-328 (GEGDGIATAT…KEYGESVGFR (222 aa)) constitute a Radical SAM core domain.

This sequence belongs to the radical SAM superfamily. Lipoyl synthase family. It depends on [4Fe-4S] cluster as a cofactor.

Its subcellular location is the plastid. The protein resides in the chloroplast. It carries out the reaction [[Fe-S] cluster scaffold protein carrying a second [4Fe-4S](2+) cluster] + N(6)-octanoyl-L-lysyl-[protein] + 2 oxidized [2Fe-2S]-[ferredoxin] + 2 S-adenosyl-L-methionine + 4 H(+) = [[Fe-S] cluster scaffold protein] + N(6)-[(R)-dihydrolipoyl]-L-lysyl-[protein] + 4 Fe(3+) + 2 hydrogen sulfide + 2 5'-deoxyadenosine + 2 L-methionine + 2 reduced [2Fe-2S]-[ferredoxin]. It functions in the pathway protein modification; protein lipoylation via endogenous pathway; protein N(6)-(lipoyl)lysine from octanoyl-[acyl-carrier-protein]: step 2/2. Functionally, catalyzes the radical-mediated insertion of two sulfur atoms into the C-6 and C-8 positions of the octanoyl moiety bound to the lipoyl domains of lipoate-dependent enzymes, thereby converting the octanoylated domains into lipoylated derivatives. In Zea mays (Maize), this protein is Lipoyl synthase 1, chloroplastic.